The chain runs to 361 residues: Ankyrin repeat domain-containing protein 16 (361 aa).

ANK repeat units lie at residues 36 to 66 (AGDTLLHCAARHGRQDILAYLVEAWSMDIEA), 70 to 99 (DYKRPLHEAASMGHRDCVRYLLGRGAVVDS), 103 to 132 (ADWTPLMMACTRKNLDVIQDLVEHGANPLL), 136 to 165 (DGWNSFHIASREGHPVILRYLLTVCPDAWK), 170 to 200 (IRRTPLHTAAMHGCLEAVQVLLERCHYEPDC), 204 to 233 (CGVTPFMDAIQCGHVSIAKLLLEQHKACSS), 238 to 268 (MGAQALHRAAVTGQDEAIRFLVCGLGIDVDV), 273 to 302 (SQLTALHYAAKEGQTNTVQTLLSLGADINS), and 306 to 335 (RNRSVLHLACAGQHVACTRLLLQSGLKDSE).

As to quaternary structure, interacts with AARS; the interaction is direct. As to expression, widely expressed in brain (at protein level).

Its subcellular location is the cytoplasm. It is found in the nucleus. In terms of biological role, required to prevent the misactivation of serine (Ser) with tRNA(Ala) by promoting the hydrolysis of Ser-mischarged tRNA(Ala), thereby playing a role in translational fidelity. Binds directly to the catalytic domain of AARS/AlaRS and captures Ser that is misactivated by AARS/AlaRS, preventing the charging of Ser adenylates to tRNA(Ala) and precluding Ser misincorporation in nascent peptides. This chain is Ankyrin repeat domain-containing protein 16, found in Mus musculus (Mouse).